We begin with the raw amino-acid sequence, 268 residues long: Cytochrome c oxidase subunit 3 (268 aa).

7 consecutive transmembrane segments (helical) span residues 19 to 39 (PWPILVSFSLFNLAIGTVLTM), 49 to 69 (FDLGLAVTVGSILLWTRDIVI), 85 to 105 (LIIGFILFIISEVFAFISVFW), 124 to 144 (PVGIIPLDTFSLPLFNTIILL), 165 to 185 (SIIGLFLTVALALIFSYFQAF), 202 to 222 (VFFASTGLHGIHVMLGTLFLF), and 245 to 265 (ILYWHFVDLVWLFLFLVVYFW).

The protein belongs to the cytochrome c oxidase subunit 3 family. Component of the cytochrome c oxidase (complex IV, CIV), a multisubunit enzyme composed of a catalytic core of 3 subunits and several supernumerary subunits. The complex exists as a monomer or a dimer and forms supercomplexes (SCs) in the inner mitochondrial membrane with ubiquinol-cytochrome c oxidoreductase (cytochrome b-c1 complex, complex III, CIII).

It localises to the mitochondrion inner membrane. The catalysed reaction is 4 Fe(II)-[cytochrome c] + O2 + 8 H(+)(in) = 4 Fe(III)-[cytochrome c] + 2 H2O + 4 H(+)(out). Its function is as follows. Component of the cytochrome c oxidase, the last enzyme in the mitochondrial electron transport chain which drives oxidative phosphorylation. The respiratory chain contains 3 multisubunit complexes succinate dehydrogenase (complex II, CII), ubiquinol-cytochrome c oxidoreductase (cytochrome b-c1 complex, complex III, CIII) and cytochrome c oxidase (complex IV, CIV), that cooperate to transfer electrons derived from NADH and succinate to molecular oxygen, creating an electrochemical gradient over the inner membrane that drives transmembrane transport and the ATP synthase. Cytochrome c oxidase is the component of the respiratory chain that catalyzes the reduction of oxygen to water. Electrons originating from reduced cytochrome c in the intermembrane space (IMS) are transferred via the dinuclear copper A center (CU(A)) of subunit 2 and heme A of subunit 1 to the active site in subunit 1, a binuclear center (BNC) formed by heme A3 and copper B (CU(B)). The BNC reduces molecular oxygen to 2 water molecules using 4 electrons from cytochrome c in the IMS and 4 protons from the mitochondrial matrix. The protein is Cytochrome c oxidase subunit 3 (COIII) of Schizophyllum commune (Split gill fungus).